A 159-amino-acid polypeptide reads, in one-letter code: Transcriptional repressor NrdR (159 aa).

Residues 3–34 fold into a zinc finger; it reads CPFCHTPDTSVIDSRVSEEGDRIRRRRRCPHC. The ATP-cone domain maps to 49–139; sequence PQVVKQDGNR…VYRSFQGAAD (91 aa).

Belongs to the NrdR family. Requires Zn(2+) as cofactor.

Negatively regulates transcription of bacterial ribonucleotide reductase nrd genes and operons by binding to NrdR-boxes. This is Transcriptional repressor NrdR from Nitrosospira multiformis (strain ATCC 25196 / NCIMB 11849 / C 71).